We begin with the raw amino-acid sequence, 159 residues long: Ribosomal RNA large subunit methyltransferase H (159 aa).

Residues Leu76, Gly108, and 127-132 (FGRMTY) each bind S-adenosyl-L-methionine.

Belongs to the RNA methyltransferase RlmH family. In terms of assembly, homodimer.

It is found in the cytoplasm. It catalyses the reaction pseudouridine(1915) in 23S rRNA + S-adenosyl-L-methionine = N(3)-methylpseudouridine(1915) in 23S rRNA + S-adenosyl-L-homocysteine + H(+). Its function is as follows. Specifically methylates the pseudouridine at position 1915 (m3Psi1915) in 23S rRNA. This is Ribosomal RNA large subunit methyltransferase H from Carboxydothermus hydrogenoformans (strain ATCC BAA-161 / DSM 6008 / Z-2901).